Reading from the N-terminus, the 1793-residue chain is MTNPRMSMYSLASEAPGGNRGTGQQSTQVSTTTLLNAIHNIYLSAQPYRLDAGTSTVVNTWLTASQTGPNGSIGGTVDASLGASAWEHARRRAEDGCIVLGSLHESTPSVLAPFLSSLPMSTPSSLYKALDAIQPFLRCSTPYNPSTPRQAALGVTLTINLAGNLTAASIALSQGGIDTTKGLMNIPSEAGYRAFDVFYYLLTSASTPAEREFLGLKPASQYALLARSGTYDPPSYLPTADDAAAAEDFRTALKEIGIKGASHRSFISTLAGLLKLGNTLDYNVDEDVLEDVCEDVSGLLGMEPEVLMKQCTTEDRSTFVGGLYEALVDWVITKANVAIAAQMARIKDGAESLDGRGVRTPTSNEEGEDTVCISVIEIPNPTLGKALALRGIFDDSMGINSEMIADGIEVPATGSSVLREMQNAVAEVAPDLGISSTPASRERQHELEKREEILEKIGLSADDDGFIKQLLFPVAGEGINLGTHSRLDLPALLASSRVWYHLSLHPTDDSPASLAALPSVTSAWSAGTVSRQLRAWRLPEWANRRNKNLDFTADFDVEEFVQRYSALGCKDGRDGIETWLLERGWSNGEVIVGKERVWMRESAWWEAESMLDLKPLNNLPGVGNMMAVNQLESGYSNNGSGYFPGQVILDDHSGSNGVVNHQRNFSHGNMSQATFNQNPVAAPSIAPTRMTGMTGMRNVAVGDYGLGHKGDTHKGAVYYNEDGEFIGPLDPELANGKQIETKSLPMKRRVWVFIVWAFTWWIPSPLLRYVGRMKRPDVRMAWREKLVLCFFIFLMNALIVFWIVAFGRLLCPNFDKAYSQKEVDTHQGQSDFWVSIHGKVYDISKFWKQQHSDQDIETTRENMLPLAGMNLDDYFVAPLPLTCPGLDIEDTFRLDLNNTLEFQIADHTSGYYQPNPATKLRAADWYSKRFEPRIKEYFHGDLVWSKGTVRKQGENDGRQWVIYDDKIYDLTNYFYTQKRLKNLGGSNFLNEKLINVIKQNPGADVTDQWNDILERAAGNATENQSAQNSMNCIRNTFYKGITDFRETPRCTVNNWLLLAFSIMLCAVILLKFVSALQFGSKRRPSPQDKFVICQVPAYTEGEESLRKALDSLTALQYDNKRKLICVICDGVIVGQGNDRPTPKIVLDILGVDPKIDPPALAFKSVGTGSEQLNYGKVYSGLYEFEGNVVPYLVVVKVGKESEQSKTKPGNRGKRDSQILLMSFLNRVHHRSPMNPLELEMFHQINNIIGVDPELYEYLFMVDADTSVREDSLNRLVAACANDGKIAGICGETALQNDEKTWWTMIQVYEYFISHHLAKAFESLFGSVTCLPGCFTMYRLRTADKGKPLIISDGVIQEYSVCDVDTLHKKNLLALGEDRYLTTLMTKHFPFMSYKFIPDAYCQTAAPESWSVLLSQRRRWINSTMHNLFELMQLKEMCGFCCFSMRFVVFIDLFGTIILPATCVYLGYLIYLVSSGTGQFPLISIIMLAAVYGLQALIFILKRQWQHIGWMIIYILAFPIYSFVLPIYSFWNQDNFSWGNTRIVIGEKGNKQIVAVDDEGYDPRSVPLQRWDDYAQANQLPGRRGGYPEKYEGEYQDQYEMDEMKSVYSSVRQGSVITGMQNRQNPYMPPQSPALFGTPSPGHMTRHSTMTGAGPFADPHLAHRQSMASMGAHDIQRTQSPYADYPTRSMGNLHGHASNPSLMGGNRSSTALGFAGGNRAAEASSSTFDFQRGLAGPDDGMIVEAIRTVLMEVDLDTVTKKQVRALVEQRLQSELVGERRTFMDRQIDHELANM.

The interval 1–28 is disordered; it reads MTNPRMSMYSLASEAPGGNRGTGQQSTQ. Asn70, Asn164, Asn638, Asn664, and Asn669 each carry an N-linked (GlcNAc...) asparagine glycan. The next 2 membrane-spanning stretches (helical) occupy residues 750 to 770 and 786 to 806; these read VWVF…LRYV and LVLC…IVAF. The Cytochrome b5 heme-binding domain maps to 815 to 877; sequence DKAYSQKEVD…GMNLDDYFVA (63 aa). Residues Asn897, Asn1019, and Asn1023 are each glycosylated (N-linked (GlcNAc...) asparagine). A helical transmembrane segment spans residues 1056-1076; the sequence is LLLAFSIMLCAVILLKFVSAL. Residue Asn1421 is glycosylated (N-linked (GlcNAc...) asparagine). A run of 3 helical transmembrane segments spans residues 1452 to 1472, 1479 to 1499, and 1507 to 1527; these read LFGT…IYLV, FPLI…LIFI, and IGWM…LPIY. Asn1534 and Asn1705 each carry an N-linked (GlcNAc...) asparagine glycan. In terms of domain architecture, DEK-C spans 1735-1791; sequence GPDDGMIVEAIRTVLMEVDLDTVTKKQVRALVEQRLQSELVGERRTFMDRQIDHELA.

It belongs to the chitin synthase family. Class V subfamily.

It localises to the cell membrane. It carries out the reaction [(1-&gt;4)-N-acetyl-beta-D-glucosaminyl](n) + UDP-N-acetyl-alpha-D-glucosamine = [(1-&gt;4)-N-acetyl-beta-D-glucosaminyl](n+1) + UDP + H(+). Functionally, polymerizes chitin, a structural polymer of the cell wall and septum, by transferring the sugar moiety of UDP-GlcNAc to the non-reducing end of the growing chitin polymer. Regulates Germination and Tolerance to Hyperosmotic Stress. Plays a key role in pathogenicity. Likely contributes to post-penetration virulence. This chain is Chitin synthase 5, found in Verticillium dahliae (strain VdLs.17 / ATCC MYA-4575 / FGSC 10137) (Verticillium wilt).